We begin with the raw amino-acid sequence, 58 residues long: Small ribosomal subunit protein bS21 (58 aa).

Residues Phe-37 to Arg-58 are disordered. A compositionally biased stretch (basic residues) spans Val-43 to Arg-58.

The protein belongs to the bacterial ribosomal protein bS21 family.

This chain is Small ribosomal subunit protein bS21 (rpsU), found in Chlamydia muridarum (strain MoPn / Nigg).